The following is a 511-amino-acid chain: MNAAFQQPVTDSKTGDAPAILEMRGISQIFPGVKALDNVSIALHPGTVTALIGENGAGKSTLVKILTGIYRPNEGEILVDGQPTSFASAQAAIDAGVTAIHQETVLFDELTVAENIFLGHAPRTRLRTIDWQTMNSRSKTLLTALESNIDPTIRLKDLSIAQRHLVAIARALSIEARIVIMDEPTAALSRKEIDDLFRIVRGLKDQGKAILFISHKFDELYEIADDFVVFRDGRAVGQGRLKETPQDEIVRMMVGRDVENVFPKIDVAIGGPVLEVEKYCHRTEFRDVSLTLRRGEILGIYGLIGAGRSELAQSLFGVTKPLSGRLTLEGREISINSPHDAIKAGIVYVPEERGRHGLALPMPIYQNMTLPSLARTSRKGFLKAAEEFALARKYAERLDLRAAALSVPVGTLSGGNQQKVVIGKWLATMPKVIILDEPTKGIDIGSKAAVHGFISELAAEGLSIIMISSELPEIIGMSDRVLVMKEGLSVGLFERDQLSPEALVRAATGNA.

ABC transporter domains lie at 21-257 (LEMR…VGRD) and 256-511 (RDVE…TGNA). Residue 53-60 (GENGAGKS) participates in ATP binding.

Belongs to the ABC transporter superfamily. Ribose importer (TC 3.A.1.2.1) family. As to quaternary structure, the complex is composed of an ATP-binding protein (RbsA), two transmembrane proteins (RbsC) and a solute-binding protein (RbsB).

The protein resides in the cell inner membrane. The enzyme catalyses D-ribose(out) + ATP + H2O = D-ribose(in) + ADP + phosphate + H(+). Functionally, part of the ABC transporter complex RbsABC involved in ribose import. Responsible for energy coupling to the transport system. The protein is Ribose import ATP-binding protein RbsA 3 of Rhizobium etli (strain ATCC 51251 / DSM 11541 / JCM 21823 / NBRC 15573 / CFN 42).